A 105-amino-acid chain; its full sequence is Replication initiation control protein YabA (105 aa).

4 residues coordinate Zn(2+): His-79, Cys-81, Cys-95, and Cys-98.

It belongs to the YabA family. In terms of assembly, homotetramer. Interacts with both DnaA and DnaN, acting as a bridge between these two proteins. Zn(2+) serves as cofactor.

The protein localises to the cytoplasm. Its subcellular location is the nucleoid. Involved in control of chromosome replication initiation. Inhibits the cooperative binding of DnaA to the oriC region, thus negatively regulating initiation of chromosome replication. Inhibits the ability of DnaA-ATP to form a helix on DNA; does not disassemble preformed DnaA-DNA helices. Decreases the residence time of DnaA on the chromosome at its binding sites (oriC, replication forks and promoter-binding sites). Tethers DnaA to the replication machinery via the DNA polymerase beta sliding clamp subunit (dnaN). Associates with oriC and other DnaA targets on the chromosome in a DnaA-dependent manner. In Streptococcus suis (strain 98HAH33), this protein is Replication initiation control protein YabA.